A 403-amino-acid polypeptide reads, in one-letter code: MASLDSLPAMKLVRFILSTLLVTSVNSQTQCRNFKSIISFGDSIADTGNLLGLSDPNDLPASAFPPYGETFFHHPTGRYSDGRLIIDFIAEFLGFPLVPPFYGCQNANFKKGVNFAVAGATALEPSFLEERGIHSTITNVSLSVQLRSFTESLPNLCGSPSDCRDMIENALILMGEIGGNDYNFALFQRKPVKEVEELVPFVIATISSAITELVCMGGRTFLVPGNFPIGYSASYLTLYKTSNKEEYDPLTGCLKWLNDFSEYYNKQLQEELNGLRKLYPHVNIIYADYYNALLRLFQEPAKFGFMNRPLPACCGVGGSYNFNFSRRCGSVGVEYCDDPSQYVNYDGIHMTEAAYRLISEGLLKGPYAIPPFKWSCLSSEIMNKMSLDTQILDEQLLQGCLKV.

The signal sequence occupies residues 1–27 (MASLDSLPAMKLVRFILSTLLVTSVNS). The active-site Nucleophile is the Ser43. N-linked (GlcNAc...) asparagine glycosylation is found at Asn139 and Asn323. Residues Asp346 and His349 contribute to the active site.

It belongs to the 'GDSL' lipolytic enzyme family.

It localises to the secreted. The protein is GDSL esterase/lipase At1g28590 of Arabidopsis thaliana (Mouse-ear cress).